A 139-amino-acid polypeptide reads, in one-letter code: ATP synthase epsilon chain (139 aa).

Belongs to the ATPase epsilon chain family. F-type ATPases have 2 components, CF(1) - the catalytic core - and CF(0) - the membrane proton channel. CF(1) has five subunits: alpha(3), beta(3), gamma(1), delta(1), epsilon(1). CF(0) has three main subunits: a, b and c.

The protein localises to the cell inner membrane. Produces ATP from ADP in the presence of a proton gradient across the membrane. This is ATP synthase epsilon chain from Acinetobacter baumannii (strain SDF).